The chain runs to 669 residues: DNA ligase (669 aa).

NAD(+)-binding positions include 34–38 (DAEYD), 83–84 (SL), and Glu114. Residue Lys116 is the N6-AMP-lysine intermediate of the active site. Positions 137, 171, 287, and 311 each coordinate NAD(+). Positions 405, 408, 423, and 428 each coordinate Zn(2+). Positions 591-669 (NVESYFAGKT…EERFLQELNK (79 aa)) constitute a BRCT domain.

This sequence belongs to the NAD-dependent DNA ligase family. LigA subfamily. The cofactor is Mg(2+). Mn(2+) serves as cofactor.

The catalysed reaction is NAD(+) + (deoxyribonucleotide)n-3'-hydroxyl + 5'-phospho-(deoxyribonucleotide)m = (deoxyribonucleotide)n+m + AMP + beta-nicotinamide D-nucleotide.. DNA ligase that catalyzes the formation of phosphodiester linkages between 5'-phosphoryl and 3'-hydroxyl groups in double-stranded DNA using NAD as a coenzyme and as the energy source for the reaction. It is essential for DNA replication and repair of damaged DNA. The polypeptide is DNA ligase (Bacillus mycoides (strain KBAB4) (Bacillus weihenstephanensis)).